A 998-amino-acid chain; its full sequence is Regulator of telomere elongation helicase 1 homolog (998 aa).

The Helicase ATP-binding domain maps to 7 to 324 (AGIPVHFPFE…KEMLLELEKA (318 aa)). Position 42–49 (42–49 (SPTGTGKT)) interacts with ATP. Residues Cys148, Cys166, Cys175, and Cys211 each contribute to the [4Fe-4S] cluster site. The DEAH box signature appears at 254–257 (DEAH). A disordered region spans residues 426–454 (QNAGKPAPKQQQQGGWLGKGNNTSNSSSS). Thr887 is modified (phosphothreonine).

The protein belongs to the helicase family. RAD3/XPD subfamily.

The protein localises to the nucleus. It carries out the reaction ATP + H2O = ADP + phosphate + H(+). Functionally, a probable ATP-dependent DNA helicase implicated in DNA repair and the maintenance of genomic stability. Acts as an anti-recombinase to counteract toxic recombination and limit crossover during meiosis. Regulates meiotic recombination and crossover homeostasis by physically dissociating strand invasion events and thereby promotes noncrossover repair by meiotic synthesis dependent strand annealing (SDSA) as well as disassembly of D loop recombination intermediates. This is Regulator of telomere elongation helicase 1 homolog from Drosophila willistoni (Fruit fly).